The primary structure comprises 462 residues: L-seryl-tRNA(Sec) selenium transferase (462 aa).

Lysine 292 is subject to N6-(pyridoxal phosphate)lysine.

This sequence belongs to the SelA family. Pyridoxal 5'-phosphate is required as a cofactor.

Its subcellular location is the cytoplasm. It catalyses the reaction L-seryl-tRNA(Sec) + selenophosphate + H(+) = L-selenocysteinyl-tRNA(Sec) + phosphate. It participates in aminoacyl-tRNA biosynthesis; selenocysteinyl-tRNA(Sec) biosynthesis; selenocysteinyl-tRNA(Sec) from L-seryl-tRNA(Sec) (bacterial route): step 1/1. In terms of biological role, converts seryl-tRNA(Sec) to selenocysteinyl-tRNA(Sec) required for selenoprotein biosynthesis. In Clostridium perfringens (strain ATCC 13124 / DSM 756 / JCM 1290 / NCIMB 6125 / NCTC 8237 / Type A), this protein is L-seryl-tRNA(Sec) selenium transferase.